Consider the following 156-residue polypeptide: Small ribosomal subunit protein uS7 (156 aa).

The protein belongs to the universal ribosomal protein uS7 family. In terms of assembly, part of the 30S ribosomal subunit. Contacts proteins S9 and S11.

Functionally, one of the primary rRNA binding proteins, it binds directly to 16S rRNA where it nucleates assembly of the head domain of the 30S subunit. Is located at the subunit interface close to the decoding center, probably blocks exit of the E-site tRNA. The sequence is that of Small ribosomal subunit protein uS7 from Campylobacter fetus subsp. fetus (strain 82-40).